A 326-amino-acid chain; its full sequence is Putative [LysW]-lysine/[LysW]-ornithine hydrolase (326 aa).

Residue His66 coordinates Zn(2+). Residue Asp68 is part of the active site. Asp90 contacts Zn(2+). The Proton acceptor role is filled by Glu117. The Zn(2+) site is built by Glu118, Glu139, and His297.

Belongs to the peptidase M20A family. LysK subfamily. It depends on Zn(2+) as a cofactor. Co(2+) serves as cofactor.

The protein localises to the cytoplasm. It carries out the reaction [amino-group carrier protein]-C-terminal-gamma-(L-lysyl)-L-glutamate + H2O = [amino-group carrier protein]-C-terminal-L-glutamate + L-lysine. The enzyme catalyses [amino-group carrier protein]-C-terminal-gamma-(L-ornithyl)-L-glutamate + H2O = [amino-group carrier protein]-C-terminal-L-glutamate + L-ornithine. The protein operates within amino-acid biosynthesis; L-lysine biosynthesis via AAA pathway; L-lysine from L-alpha-aminoadipate (Thermus route): step 5/5. Its pathway is amino-acid biosynthesis; L-arginine biosynthesis. Catalyzes the release of L-lysine from [LysW]-gamma-L-lysine and the release of L-ornithine from [LysW]-L-ornithine. This is Putative [LysW]-lysine/[LysW]-ornithine hydrolase from Pyrococcus furiosus (strain ATCC 43587 / DSM 3638 / JCM 8422 / Vc1).